Consider the following 592-residue polypeptide: Vacuolin-B (592 aa).

Residues 1 to 30 are compositionally biased toward polar residues; it reads MIESSSFMKKTSSENSIGSRSNIHEASTFS. Residues 1–35 form a disordered region; the sequence is MIESSSFMKKTSSENSIGSRSNIHEASTFSSEHEN. The stretch at 480 to 534 forms a coiled coil; it reads KTTEARLKAETDNIALEQKGKAIIAEAQAKLESAQKQAQALLITAEAQKKVQEMQ. The segment at 491–555 is oligomerization domain; the sequence is DNIALEQKGK…EIELAKIKSE (65 aa).

Belongs to the vacuolin family. As to quaternary structure, homotrimer.

The protein resides in the endosome membrane. The protein localises to the lysosome membrane. Negative regulator of late steps of the endocytic pathway. This is Vacuolin-B (vacB) from Dictyostelium discoideum (Social amoeba).